We begin with the raw amino-acid sequence, 739 residues long: Phosphoribosylformylglycinamidine synthase subunit PurL (739 aa).

Histidine 54 is a catalytic residue. The ATP site is built by tyrosine 57 and lysine 96. Glutamate 98 contacts Mg(2+). Substrate-binding positions include 99–102 (SHNH) and arginine 121. Histidine 100 (proton acceptor) is an active-site residue. Residue aspartate 122 coordinates Mg(2+). Glutamine 245 serves as a coordination point for substrate. Aspartate 273 serves as a coordination point for Mg(2+). 317-319 (ESQ) provides a ligand contact to substrate. ATP is bound by residues aspartate 500 and glycine 537. Residue asparagine 538 coordinates Mg(2+). Serine 540 is a substrate binding site.

It belongs to the FGAMS family. As to quaternary structure, monomer. Part of the FGAM synthase complex composed of 1 PurL, 1 PurQ and 2 PurS subunits.

Its subcellular location is the cytoplasm. The enzyme catalyses N(2)-formyl-N(1)-(5-phospho-beta-D-ribosyl)glycinamide + L-glutamine + ATP + H2O = 2-formamido-N(1)-(5-O-phospho-beta-D-ribosyl)acetamidine + L-glutamate + ADP + phosphate + H(+). It participates in purine metabolism; IMP biosynthesis via de novo pathway; 5-amino-1-(5-phospho-D-ribosyl)imidazole from N(2)-formyl-N(1)-(5-phospho-D-ribosyl)glycinamide: step 1/2. In terms of biological role, part of the phosphoribosylformylglycinamidine synthase complex involved in the purines biosynthetic pathway. Catalyzes the ATP-dependent conversion of formylglycinamide ribonucleotide (FGAR) and glutamine to yield formylglycinamidine ribonucleotide (FGAM) and glutamate. The FGAM synthase complex is composed of three subunits. PurQ produces an ammonia molecule by converting glutamine to glutamate. PurL transfers the ammonia molecule to FGAR to form FGAM in an ATP-dependent manner. PurS interacts with PurQ and PurL and is thought to assist in the transfer of the ammonia molecule from PurQ to PurL. The chain is Phosphoribosylformylglycinamidine synthase subunit PurL from Exiguobacterium sp. (strain ATCC BAA-1283 / AT1b).